Consider the following 510-residue polypeptide: NAD(P)H-quinone oxidoreductase subunit 2 B, chloroplastic (510 aa).

Helical transmembrane passes span 24 to 44 (LLFF…GLIL), 57 to 77 (IPWL…ALLF), 99 to 119 (IFQF…VEYI), 124 to 144 (MAIT…MFLC), 149 to 169 (LITI…LSGY), 183 to 203 (YLLM…WLYG), 227 to 247 (PGIS…LSPA), 295 to 315 (WHLL…LIAI), 323 to 343 (MLAY…IVGD), 354 to 374 (YMLF…LFGL), 395 to 415 (ALSL…AGFF), 418 to 438 (LYLF…IGLL), and 484 to 504 (MIVC…IIAI).

It belongs to the complex I subunit 2 family. In terms of assembly, NDH is composed of at least 16 different subunits, 5 of which are encoded in the nucleus.

It is found in the plastid. Its subcellular location is the chloroplast thylakoid membrane. It catalyses the reaction a plastoquinone + NADH + (n+1) H(+)(in) = a plastoquinol + NAD(+) + n H(+)(out). The enzyme catalyses a plastoquinone + NADPH + (n+1) H(+)(in) = a plastoquinol + NADP(+) + n H(+)(out). NDH shuttles electrons from NAD(P)H:plastoquinone, via FMN and iron-sulfur (Fe-S) centers, to quinones in the photosynthetic chain and possibly in a chloroplast respiratory chain. The immediate electron acceptor for the enzyme in this species is believed to be plastoquinone. Couples the redox reaction to proton translocation, and thus conserves the redox energy in a proton gradient. This chain is NAD(P)H-quinone oxidoreductase subunit 2 B, chloroplastic, found in Guizotia abyssinica (Niger).